The sequence spans 166 residues: Flagellar protein LafL (166 aa).

A helical membrane pass occupies residues 6–26 (MIAMFIAMIITSALVSAATIM).

Belongs to the FliL family.

The protein resides in the cell inner membrane. In terms of biological role, controls the rotational direction of flagella during chemotaxis. This is Flagellar protein LafL (lafL) from Vibrio parahaemolyticus serotype O3:K6 (strain RIMD 2210633).